Reading from the N-terminus, the 500-residue chain is Glutathione reductase (500 aa).

FAD contacts are provided by Ser12 and Gly13. Ser12 contacts glutathione. Arg19 is a binding site for glutathione. Residues Glu32, Thr39, Cys40, and Lys48 each contribute to the FAD site. A disulfide bridge links Cys40 with Cys45. Residue Tyr95 coordinates glutathione. Ala111 provides a ligand contact to FAD. NADP(+)-binding residues include Ile187, Glu190, Arg207, Arg213, and Gly272. The FAD site is built by Asp312 and Thr354. Position 362 (Arg362) interacts with glutathione. Residue Val384 coordinates NADP(+). Residue His485 coordinates FAD. His485 functions as the Proton acceptor in the catalytic mechanism.

This sequence belongs to the class-I pyridine nucleotide-disulfide oxidoreductase family. In terms of assembly, homodimer. FAD is required as a cofactor.

It is found in the cytoplasm. The catalysed reaction is 2 glutathione + NADP(+) = glutathione disulfide + NADPH + H(+). Catalyzes the reduction of glutathione disulfide (GSSG) to reduced glutathione (GSH). Constitutes the major mechanism to maintain a high GSH:GSSG ratio in the cytosol. In Plasmodium falciparum (isolate K1 / Thailand), this protein is Glutathione reductase.